We begin with the raw amino-acid sequence, 276 residues long: 2-dehydro-3-deoxyphosphooctonate aldolase (276 aa).

It belongs to the KdsA family.

It localises to the cytoplasm. It catalyses the reaction D-arabinose 5-phosphate + phosphoenolpyruvate + H2O = 3-deoxy-alpha-D-manno-2-octulosonate-8-phosphate + phosphate. It participates in carbohydrate biosynthesis; 3-deoxy-D-manno-octulosonate biosynthesis; 3-deoxy-D-manno-octulosonate from D-ribulose 5-phosphate: step 2/3. It functions in the pathway bacterial outer membrane biogenesis; lipopolysaccharide biosynthesis. This chain is 2-dehydro-3-deoxyphosphooctonate aldolase, found in Xylella fastidiosa (strain M23).